The chain runs to 37 residues: Cytochrome b6-f complex subunit 5 (37 aa).

A helical membrane pass occupies residues 5 to 25; sequence LLSGIVLGLIPITLVGLFVTA.

This sequence belongs to the PetG family. The 4 large subunits of the cytochrome b6-f complex are cytochrome b6, subunit IV (17 kDa polypeptide, PetD), cytochrome f and the Rieske protein, while the 4 small subunits are PetG, PetL, PetM and PetN. The complex functions as a dimer.

It localises to the plastid. The protein resides in the chloroplast thylakoid membrane. Its function is as follows. Component of the cytochrome b6-f complex, which mediates electron transfer between photosystem II (PSII) and photosystem I (PSI), cyclic electron flow around PSI, and state transitions. PetG is required for either the stability or assembly of the cytochrome b6-f complex. The polypeptide is Cytochrome b6-f complex subunit 5 (Welwitschia mirabilis (Tree tumbo)).